The chain runs to 190 residues: UPF0301 protein DP2218 (190 aa).

It belongs to the UPF0301 (AlgH) family.

The protein is UPF0301 protein DP2218 of Desulfotalea psychrophila (strain LSv54 / DSM 12343).